Here is a 221-residue protein sequence, read N- to C-terminus: MDYLTHKLLDPTRAKSCIQSIQRDQSLWKDGKSTAGLYASKVKNNLQLDKKSKVSIDNSNLIIKAIISDLLVKSFTIPRKVHGVMFSKSSKGNSYGMHLDNAYMSTGRSDLSFTLFLSDPGEYEGGELAIETIQETRKIKLPQGHIIIYPSTTLHSVEEVTSGTRIVCVGWIQSYIPNNEDRKILFSLDAGAKGLLAAHGQSHELDLVFQSYNNLLRRLGG.

The region spanning 80 to 174 (KVHGVMFSKS…RIVCVGWIQS (95 aa)) is the Fe2OG dioxygenase domain. Residues His98, Asp100, and His155 each contribute to the Fe cation site. Position 165 (Arg165) interacts with 2-oxoglutarate.

The cofactor is Fe(2+). It depends on L-ascorbate as a cofactor.

The polypeptide is PKHD-type hydroxylase Pro_1271 (Prochlorococcus marinus (strain SARG / CCMP1375 / SS120)).